Consider the following 562-residue polypeptide: Oxygen-dependent choline dehydrogenase (562 aa).

Aspartate 4–glutamate 33 provides a ligand contact to FAD. Histidine 473 functions as the Proton acceptor in the catalytic mechanism.

Belongs to the GMC oxidoreductase family. FAD is required as a cofactor.

The enzyme catalyses choline + A = betaine aldehyde + AH2. The catalysed reaction is betaine aldehyde + NAD(+) + H2O = glycine betaine + NADH + 2 H(+). Its pathway is amine and polyamine biosynthesis; betaine biosynthesis via choline pathway; betaine aldehyde from choline (cytochrome c reductase route): step 1/1. Functionally, involved in the biosynthesis of the osmoprotectant glycine betaine. Catalyzes the oxidation of choline to betaine aldehyde and betaine aldehyde to glycine betaine at the same rate. The sequence is that of Oxygen-dependent choline dehydrogenase from Escherichia coli (strain SMS-3-5 / SECEC).